Here is a 397-residue protein sequence, read N- to C-terminus: MNTATSQPRRLTILGSTGSIGTNTLDVIRQMGGRDRFDIMALTGHGNVALLAEQALVTGARLAVTSDENQYIALKDLLSGSGIDVAAGSSGLQEAACLEADWVMAAIVGTAGLQPTLTAAARGADIALANKECLVSAGELFIETVRKGGGKIIPVDSEHSAIFQCLDENHRDTLERIVLTASGGPFRTFTRQQMADVSVQTARAHPNWSMGLKVSIGSASMFNKALEMIEAKHLFDLTPDQIEVIVHPQSIIHSMVGYSDGSVLAQLGVPDMRTAIGYALSYPKRAALDVDRLDFTKLARLDFEAPDLDRFPAIRLARTALERGGLQGAVLNAAEECAFEAFVEEKIGFLAMADVVEDVMDHLSGLAPATVIADVFAADAQARRRAQEVILNQGRTR.

NADPH contacts are provided by Thr-17, Gly-18, Ser-19, Ile-20, Asn-47, and Asn-130. Lys-131 is a binding site for 1-deoxy-D-xylulose 5-phosphate. Residue Glu-132 coordinates NADPH. Asp-156 lines the Mn(2+) pocket. Positions 157, 158, 182, and 205 each coordinate 1-deoxy-D-xylulose 5-phosphate. Glu-158 is a binding site for Mn(2+). Gly-211 lines the NADPH pocket. 1-deoxy-D-xylulose 5-phosphate contacts are provided by Ser-218, Asn-223, Lys-224, and Glu-227. Residue Glu-227 coordinates Mn(2+).

The protein belongs to the DXR family. Requires Mg(2+) as cofactor. It depends on Mn(2+) as a cofactor.

It catalyses the reaction 2-C-methyl-D-erythritol 4-phosphate + NADP(+) = 1-deoxy-D-xylulose 5-phosphate + NADPH + H(+). It participates in isoprenoid biosynthesis; isopentenyl diphosphate biosynthesis via DXP pathway; isopentenyl diphosphate from 1-deoxy-D-xylulose 5-phosphate: step 1/6. Catalyzes the NADPH-dependent rearrangement and reduction of 1-deoxy-D-xylulose-5-phosphate (DXP) to 2-C-methyl-D-erythritol 4-phosphate (MEP). The polypeptide is 1-deoxy-D-xylulose 5-phosphate reductoisomerase (Allorhizobium ampelinum (strain ATCC BAA-846 / DSM 112012 / S4) (Agrobacterium vitis (strain S4))).